A 133-amino-acid polypeptide reads, in one-letter code: MEPISHLVKSSLPNYLSSLPIPDSVGGWFKLSFKDWLALIPPTVVVAGIGYTAYLAYCPAAKAICSAKTSGRCNNLIRKNEPKVVDMIDVEDIAEKAAFCRCWKTKNWPYCDGSHGEHNKQTGDNVGPIVIKK.

The Lumenal segment spans residues 1–35 (MEPISHLVKSSLPNYLSSLPIPDSVGGWFKLSFKD). A helical transmembrane segment spans residues 36–58 (WLALIPPTVVVAGIGYTAYLAYC). Residues 59–133 (PAAKAICSAK…DNVGPIVIKK (75 aa)) are Cytoplasmic-facing. The [2Fe-2S] cluster site is built by Cys100, Cys102, Cys111, and His115.

This sequence belongs to the CISD protein family. CISD2 subfamily. The cofactor is [2Fe-2S] cluster.

It localises to the endoplasmic reticulum membrane. The chain is CDGSH iron-sulfur domain-containing protein 2 homolog from Drosophila yakuba (Fruit fly).